Here is a 301-residue protein sequence, read N- to C-terminus: Tetrahydromethanopterin S-methyltransferase subunit E (301 aa).

Helical transmembrane passes span 85 to 105 (VIFAIAIGALVASAVHGTYCI), 130 to 150 (HTPVMMGYAFITTFCILVVSY), 151 to 171 (IMVAVLAHPFPLTLLAFIWGI), 232 to 252 (PVTGLAFGMTVFLSGWVTAVF), and 258 to 278 (LTMGWLSVAAGVILVLLLIIW).

This sequence belongs to the MtrE family. The complex is composed of 8 subunits; MtrA, MtrB, MtrC, MtrD, MtrE, MtrF, MtrG and MtrH.

The protein resides in the cell membrane. The enzyme catalyses 5-methyl-5,6,7,8-tetrahydromethanopterin + coenzyme M + 2 Na(+)(in) = 5,6,7,8-tetrahydromethanopterin + methyl-coenzyme M + 2 Na(+)(out). Its function is as follows. Part of a complex that catalyzes the formation of methyl-coenzyme M and tetrahydromethanopterin from coenzyme M and methyl-tetrahydromethanopterin. This is an energy-conserving, sodium-ion translocating step. In Methanococcoides burtonii (strain DSM 6242 / NBRC 107633 / OCM 468 / ACE-M), this protein is Tetrahydromethanopterin S-methyltransferase subunit E.